The following is a 189-amino-acid chain: Tetratricopeptide repeat protein 36 (189 aa).

3 TPR repeats span residues 51–84 (SKAL…LPER), 86–118 (SAYN…SGGR), and 123–156 (RQSF…GSPF).

It belongs to the TTC36 family.

The polypeptide is Tetratricopeptide repeat protein 36 (TTC36) (Homo sapiens (Human)).